Here is a 167-residue protein sequence, read N- to C-terminus: Gametocyte-specific factor 1 (167 aa).

2 consecutive CHHC U11-48K-type zinc fingers follow at residues L14 to H41 and L48 to S75. C17, H23, H33, C37, C51, H57, H67, and C71 together coordinate Zn(2+).

This sequence belongs to the UPF0224 (FAM112) family.

It localises to the cytoplasm. Functionally, required for spermatogenesis and is involved in the suppression of retrotransposon transcription in male germ cells. The chain is Gametocyte-specific factor 1 (GTSF1) from Bos taurus (Bovine).